The sequence spans 344 residues: Phosphoribosylformylglycinamidine cyclo-ligase (344 aa).

Belongs to the AIR synthase family.

Its subcellular location is the cytoplasm. The catalysed reaction is 2-formamido-N(1)-(5-O-phospho-beta-D-ribosyl)acetamidine + ATP = 5-amino-1-(5-phospho-beta-D-ribosyl)imidazole + ADP + phosphate + H(+). The protein operates within purine metabolism; IMP biosynthesis via de novo pathway; 5-amino-1-(5-phospho-D-ribosyl)imidazole from N(2)-formyl-N(1)-(5-phospho-D-ribosyl)glycinamide: step 2/2. This is Phosphoribosylformylglycinamidine cyclo-ligase from Leptospira interrogans serogroup Icterohaemorrhagiae serovar Lai (strain 56601).